A 233-amino-acid chain; its full sequence is Membrane glycoprotein UL9 (233 aa).

The signal sequence occupies residues 1–20; it reads MSKRLQVFPWITILFYTSKS. Residues Asn40, Asn94, Asn101, Asn131, and Asn169 are each glycosylated (N-linked (GlcNAc...) asparagine; by host). A helical transmembrane segment spans residues 194-214; it reads MWIIPLVIVITIIVLICFKFP.

The protein belongs to the HHV-5 UL9 family.

It is found in the host membrane. The protein is Membrane glycoprotein UL9 (UL9) of Homo sapiens (Human).